The chain runs to 323 residues: Magnesium transporter NIPA1 (323 aa).

Residues 1–21 (MGTAAAAAAAGEGARGPSPAA) lie on the Extracellular side of the membrane. Residues 22-42 (VSLGLGVAVVSSLVNGSTFVL) form a helical membrane-spanning segment. Residues 43 to 60 (QKKGIVRAKRRGTSYLTD) lie on the Cytoplasmic side of the membrane. The chain crosses the membrane as a helical span at residues 61 to 81 (IVWWAGTIAMAVGQIGNFLAY). A topological domain (extracellular) is located at residue Thr82. The helical transmembrane segment at 83–103 (AVPTVLVTPLGALGVPFGSIL) threads the bilayer. At 104–111 (ASYLLKEK) the chain is on the cytoplasmic side. The helical transmembrane segment at 112 to 132 (LNILGKLGCLLSCAGSVVLII) threads the bilayer. At 133-153 (HSPKSESVTTQAELEEKLTNP) the chain is on the extracellular side. Residues 154–174 (VFVGYLCIVLLMLLLLIFWIA) traverse the membrane as a helical segment. Residues 175–177 (PAH) lie on the Cytoplasmic side of the membrane. The chain crosses the membrane as a helical span at residues 178–198 (GPTNIMVYISICSLLGSFTVP). The Extracellular portion of the chain corresponds to 199–218 (STKGIGLAAQDILHNNPSSQ). Residues 219–239 (RALCLCLVLLAVLGCSIIVQF) traverse the membrane as a helical segment. Residues 240–253 (RYINKALECFDSSV) are Cytoplasmic-facing. A helical membrane pass occupies residues 254-274 (FGAIYYVVFTTLVLLASAILF). Residues 275 to 284 (REWSNVGLVD) are Extracellular-facing. A helical membrane pass occupies residues 285–305 (FLGMACGFTTVSVGIVLIQVF). Residues 306-323 (KEFNFNLGEMNKSNMKTD) are Cytoplasmic-facing.

Belongs to the NIPA family. Homodimer. As to expression, widely expressed. Predominantly expressed in neuronal tissues. Brain, heart, kidney, liver and colon (at protein level).

It is found in the cell membrane. It localises to the early endosome. The catalysed reaction is Mg(2+)(in) = Mg(2+)(out). Acts as a Mg(2+) transporter. Can also transport other divalent cations such as Fe(2+), Sr(2+), Ba(2+), Zn(2+) and Co(2+) but to a much less extent than Mg(2+). This is Magnesium transporter NIPA1 (Nipa1) from Mus musculus (Mouse).